The primary structure comprises 492 residues: MSLREKTISGAKWSAIATVIIIGLGLVQMTVLARIIDNHQFGLLTVSLVIIALADTLSDFGIANSIIQRKEISHLELTTLYWLNVGLGIVVCVAVFLLSDLIGDVLNNPDLAPLIKTLSLAFVVIPHGQQFRALMQKELEFNKIGMIETSAVLAGFTCTVVSAHFWPLAMTAILGYLVNSAVRTLLFGYFGRKIYRPGLHFSLASVAPNLRFGAWLTADSIINYLNTNLSTLVLARILGAGVAGGYNLAYNVAVVPPMKLNPIITRVLFPAFAKIQDDTEKLRVNFYKLLSVVGIINFPALLGLMVVSNNFVPLVFGEKWNSIIPVLQLLCVVGLLRSVGNPIGSLLMAKARVDISFKFNVFKTFLFIPAIVIGGQMAGAIGVTLGFLLVQIINTILSYFVMIKPVLGSSYRQYILSLWLPFYLSLPTLVVSYALGIVLKGQLALGMLLAVQIATGVLAFVVMIVLSRHPLVVEVKRQFCRSEKMKMLLRAG.

At 1 to 12 (MSLREKTISGAK) the chain is on the cytoplasmic side. The helical transmembrane segment at 13-33 (WSAIATVIIIGLGLVQMTVLA) threads the bilayer. Residues 34-42 (RIIDNHQFG) lie on the Periplasmic side of the membrane. A helical membrane pass occupies residues 43-63 (LLTVSLVIIALADTLSDFGIA). At 64 to 81 (NSIIQRKEISHLELTTLY) the chain is on the cytoplasmic side. Residues 82-102 (WLNVGLGIVVCVAVFLLSDLI) form a helical membrane-spanning segment. Residues 103-104 (GD) are Periplasmic-facing. Residues 105–125 (VLNNPDLAPLIKTLSLAFVVI) form a helical membrane-spanning segment. Topologically, residues 126–157 (PHGQQFRALMQKELEFNKIGMIETSAVLAGFT) are cytoplasmic. Residues 158–178 (CTVVSAHFWPLAMTAILGYLV) traverse the membrane as a helical segment. Residues 179–236 (NSAVRTLLFGYFGRKIYRPGLHFSLASVAPNLRFGAWLTADSIINYLNTNLSTLVLAR) are Periplasmic-facing. The chain crosses the membrane as a helical span at residues 237–257 (ILGAGVAGGYNLAYNVAVVPP). The Cytoplasmic portion of the chain corresponds to 258–288 (MKLNPIITRVLFPAFAKIQDDTEKLRVNFYK). The helical transmembrane segment at 289 to 309 (LLSVVGIINFPALLGLMVVSN) threads the bilayer. Residues 310 to 322 (NFVPLVFGEKWNS) lie on the Periplasmic side of the membrane. The helical transmembrane segment at 323–343 (IIPVLQLLCVVGLLRSVGNPI) threads the bilayer. The Cytoplasmic segment spans residues 344–364 (GSLLMAKARVDISFKFNVFKT). Residues 365-385 (FLFIPAIVIGGQMAGAIGVTL) traverse the membrane as a helical segment. A topological domain (periplasmic) is located at residue glycine 386. The chain crosses the membrane as a helical span at residues 387–407 (FLLVQIINTILSYFVMIKPVL). The Cytoplasmic segment spans residues 408 to 417 (GSSYRQYILS). Residues 418 to 438 (LWLPFYLSLPTLVVSYALGIV) form a helical membrane-spanning segment. Residues 439–445 (LKGQLAL) are Periplasmic-facing. Residues 446-466 (GMLLAVQIATGVLAFVVMIVL) traverse the membrane as a helical segment. Topologically, residues 467-492 (SRHPLVVEVKRQFCRSEKMKMLLRAG) are cytoplasmic.

This sequence belongs to the polysaccharide synthase family.

Its subcellular location is the cell inner membrane. It functions in the pathway bacterial outer membrane biogenesis; lipopolysaccharide biosynthesis. The chain is Lipopolysaccharide biosynthesis protein WzxC (wzxC) from Escherichia coli (strain K12).